A 246-amino-acid polypeptide reads, in one-letter code: Homeobox protein Crxos (246 aa).

2 DNA-binding regions (homeobox) span residues 22–72 and 129–182; these read WEQL…EMRP and ELTD…RGYR. A Nuclear localization signal motif is present at residues 163–177; sequence RKDLIRSWFITQRHR.

Belongs to the paired homeobox family. As to expression, specifically expressed during the preimplantation stages of embryonic development, between the four-cell to eight-cell stage and the morula stage. Expressed in adult testis. Detected in early embryos; expression decreases gradually with embryonic development. Also expressed in extraembryonic tissues after E14.5, expression level increases drastically until E18.5, immediately before partum.

The protein resides in the nucleus. In terms of biological role, transcription factor that acts as a regulator of embryonic stem cell differentiation during the preimplantation stages of embryonic development. Functionally, transcription factor that acts as a positive regulator of embryonic stem cell differentiation. Transcription factor that promotes embryonic stem cell pluripotency. Its function is as follows. Transcription factor that promotes embryonic stem cell pluripotency. Also involved in extraembryonic tissues development by promoting the expression of placental prolactin family genes. The chain is Homeobox protein Crxos from Mus musculus (Mouse).